Reading from the N-terminus, the 226-residue chain is MVKPPAGGNDGGRAKPARLKTAFGRTPSQQAWLERQINDPFSAKARALGYRSRAAFKISEIDDKYRFFKKGAKVIDLGCAPGGWLQMATERGVTDIVGVDLLPVDPVAPAHILEMDFTDPACPPKMLELLGGAPDLVMSDMAPNTVGHRETDHLRIVGLIEIGADFAIEVLKPGGAFVAKAFQGGETAAVIAQLKKHFTKVVHFKPKASRSDSSEVFLVATGFKGR.

Residues Gly82, Trp84, Asp100, Asp116, and Asp140 each coordinate S-adenosyl-L-methionine. The active-site Proton acceptor is the Lys180.

Belongs to the class I-like SAM-binding methyltransferase superfamily. RNA methyltransferase RlmE family.

Its subcellular location is the cytoplasm. It catalyses the reaction uridine(2552) in 23S rRNA + S-adenosyl-L-methionine = 2'-O-methyluridine(2552) in 23S rRNA + S-adenosyl-L-homocysteine + H(+). In terms of biological role, specifically methylates the uridine in position 2552 of 23S rRNA at the 2'-O position of the ribose in the fully assembled 50S ribosomal subunit. The chain is Ribosomal RNA large subunit methyltransferase E from Caulobacter sp. (strain K31).